Here is a 409-residue protein sequence, read N- to C-terminus: Translation initiation factor 2 subunit gamma (409 aa).

One can recognise a tr-type G domain in the interval 7–203 (QPEVNIGLVG…AIEREIPTPE (197 aa)). A G1 region spans residues 16-23 (GHVDHGKT). Residues aspartate 19, threonine 23, glycine 44, and serine 46 each contribute to the Mg(2+) site. 19 to 24 (DHGKTT) is a GTP binding site. The tract at residues 44-48 (GISIR) is G2. Residues 90–93 (DAPG) form a G3 region. GTP-binding positions include 146 to 149 (NKID) and 181 to 183 (SAQ). Residues 146 to 149 (NKID) form a G4 region. The tract at residues 181–183 (SAQ) is G5.

The protein belongs to the TRAFAC class translation factor GTPase superfamily. Classic translation factor GTPase family. EIF2G subfamily. Heterotrimer composed of an alpha, a beta and a gamma chain. Requires Mg(2+) as cofactor.

The enzyme catalyses GTP + H2O = GDP + phosphate + H(+). Functionally, eIF-2 functions in the early steps of protein synthesis by forming a ternary complex with GTP and initiator tRNA. The protein is Translation initiation factor 2 subunit gamma of Haloquadratum walsbyi (strain DSM 16790 / HBSQ001).